A 1163-amino-acid polypeptide reads, in one-letter code: Protein phosphatase 1 regulatory subunit 26 (1163 aa).

Residues His-65–Leu-83 show a composition bias toward basic and acidic residues. Disordered stretches follow at residues His-65–Lys-91, Arg-144–Arg-253, Arg-266–Leu-393, Ala-463–Ser-496, Val-514–Leu-653, Arg-672–Ala-929, and Thr-1073–Leu-1163. Composition is skewed to polar residues over residues His-163 to Ser-179 and Asp-189 to Glu-201. A compositionally biased stretch (basic and acidic residues) spans Ile-208–Asp-236. The segment covering Lys-273–Leu-297 has biased composition (polar residues). Residues Met-315–Arg-324 show a composition bias toward basic residues. A compositionally biased stretch (low complexity) spans Gly-515 to Ile-535. Basic and acidic residues-rich tracts occupy residues Lys-566 to Gln-581 and Ala-634 to Ser-645. The segment covering Arg-672–Arg-682 has biased composition (basic residues). Positions Thr-766 to Ser-780 are enriched in low complexity. Residues Ser-783–Glu-792 show a composition bias toward acidic residues. Composition is skewed to basic and acidic residues over residues Leu-793–Arg-808 and Glu-850–Arg-859. Positions Thr-860–Lys-871 are enriched in polar residues. Positions Ser-901–Arg-910 are enriched in low complexity. A compositionally biased stretch (basic and acidic residues) spans Gln-1105 to Gln-1131. A Phosphoserine modification is found at Ser-1111. Polar residues-rich tracts occupy residues Gln-1133–Thr-1146 and Ala-1154–Leu-1163.

As to quaternary structure, interacts with UTP20 and PPP1CA.

The protein resides in the nucleus. Its subcellular location is the nucleolus. Functionally, inhibits phosphatase activity of protein phosphatase 1 (PP1) complexes. May positively regulate cell proliferation. The polypeptide is Protein phosphatase 1 regulatory subunit 26 (Ppp1r26) (Mus musculus (Mouse)).